We begin with the raw amino-acid sequence, 568 residues long: Protein phosphatase 1 regulatory inhibitor subunit 16B (568 aa).

The stretch at 15 to 55 forms a coiled coil; the sequence is EKVPTLERLRAAQKRRAQQLKKWAQYEQDLLHRKRKHERKR. Ser-69 is modified (phosphoserine). ANK repeat units follow at residues 100–129, 133–162, 228–257, and 261–290; these read DGLT…NVNA, ELWT…DLLA, QGAT…RVDV, and DGWE…SLSA. Phosphoserine is present on residues Ser-333, Ser-337, and Ser-350. Residues 373–403 are disordered; that stretch reads SAAEDQRTSTYNGDIRETRTDQENKDPNPRL. Basic and acidic residues predominate over residues 386–403; the sequence is DIRETRTDQENKDPNPRL. The residue at position 477 (Ser-477) is a Phosphoserine. A compositionally biased stretch (low complexity) spans 505-517; the sequence is SSVARSGESSSEG. A disordered region spans residues 505-527; it reads SSVARSGESSSEGKAPLIGGRTS. Residues 531-560 form an ANK 5 repeat; the sequence is SNGTSVYYTVTSGDPPLLKFKAPMEEMEEK. Cys-564 carries S-palmitoyl cysteine lipidation. At Cys-565 the chain carries Cysteine methyl ester. Cys-565 carries the S-farnesyl cysteine lipid modification. Residues 566 to 568 constitute a propeptide, removed in mature form; it reads RIS.

As to quaternary structure, interacts with PPP1CA, PPP1CB and MSN. Interacts (via its fourth ankyrin repeat) with the mature dimeric form of RPSA/LAMR1. Interacts with EEF1A1. Interacts with PTEN. Interacts with ECE1. Phosphorylated by PKA and, after PKA priming, by GSK3B. Phosphorylation by GSK3B reduces its association with PP1C and enhances PP1C activity. Dephosphorylation by its associated PP1C results in enhanced association with PP1C, but reduced PP1C activity.

It localises to the cell membrane. It is found in the nucleus. Its subcellular location is the cell projection. Regulator of protein phosphatase 1 (PP1) that acts as a positive regulator of pulmonary endothelial cell (EC) barrier function. Protects the endothelial barrier from lipopolysaccharide (LPS)-induced vascular leakage. Involved in the regulation of the PI3K/AKT signaling pathway. Involved in the regulation of angiogenesis and endothelial cell proliferation through the control of ECE1 dephosphorylation, trafficking and activity. Involved in the regulation of endothelial cell filopodia extension. May be a downstream target for TGF-beta1 signaling cascade in endothelial cells. Involved in PKA-mediated moesin dephosphorylation which is important in EC barrier protection against thrombin stimulation. Promotes the interaction of PPP1CA with RPSA/LAMR1 and in turn facilitates the dephosphorylation of RPSA/LAMR1. Involved in the dephosphorylation of EEF1A1. The protein is Protein phosphatase 1 regulatory inhibitor subunit 16B (Ppp1r16b) of Mus musculus (Mouse).